The sequence spans 437 residues: Methylenetetrahydrofolate--tRNA-(uracil-5-)-methyltransferase TrmFO (437 aa).

An FAD-binding site is contributed by 10–15 (GAGLAG).

The protein belongs to the MnmG family. TrmFO subfamily. The cofactor is FAD.

It is found in the cytoplasm. The enzyme catalyses uridine(54) in tRNA + (6R)-5,10-methylene-5,6,7,8-tetrahydrofolate + NADH + H(+) = 5-methyluridine(54) in tRNA + (6S)-5,6,7,8-tetrahydrofolate + NAD(+). It catalyses the reaction uridine(54) in tRNA + (6R)-5,10-methylene-5,6,7,8-tetrahydrofolate + NADPH + H(+) = 5-methyluridine(54) in tRNA + (6S)-5,6,7,8-tetrahydrofolate + NADP(+). In terms of biological role, catalyzes the folate-dependent formation of 5-methyl-uridine at position 54 (M-5-U54) in all tRNAs. This is Methylenetetrahydrofolate--tRNA-(uracil-5-)-methyltransferase TrmFO from Pelotomaculum thermopropionicum (strain DSM 13744 / JCM 10971 / SI).